A 93-amino-acid polypeptide reads, in one-letter code: Cobalt transport protein CbiN (93 aa).

Helical transmembrane passes span 5 to 25 (LMLL…NHGG) and 63 to 83 (LLFT…LGYC).

This sequence belongs to the CbiN family. As to quaternary structure, forms an energy-coupling factor (ECF) transporter complex composed of an ATP-binding protein (A component, CbiO), a transmembrane protein (T component, CbiQ) and 2 possible substrate-capture proteins (S components, CbiM and CbiN) of unknown stoichimetry.

It is found in the cell inner membrane. It participates in cofactor biosynthesis; adenosylcobalamin biosynthesis. Part of the energy-coupling factor (ECF) transporter complex CbiMNOQ involved in cobalt import. The chain is Cobalt transport protein CbiN from Salmonella paratyphi B (strain ATCC BAA-1250 / SPB7).